We begin with the raw amino-acid sequence, 668 residues long: Fructose-1,6-bisphosphatase class 3 (668 aa).

It belongs to the FBPase class 3 family. Mn(2+) is required as a cofactor.

The enzyme catalyses beta-D-fructose 1,6-bisphosphate + H2O = beta-D-fructose 6-phosphate + phosphate. It functions in the pathway carbohydrate biosynthesis; gluconeogenesis. This chain is Fructose-1,6-bisphosphatase class 3, found in Clostridium botulinum (strain ATCC 19397 / Type A).